A 574-amino-acid polypeptide reads, in one-letter code: Kelch-like protein 35 (574 aa).

The region spanning 40 to 110 (TDVVLRAGGR…VYGAGVRLRA (71 aa)) is the BTB domain. In terms of domain architecture, BACK spans 146 to 248 (SLALRRVAAA…APAYFLEKVE (103 aa)). Kelch repeat units follow at residues 292–341 (VIVV…ALRN), 343–385 (IYVS…ALQG), 386–432 (QLFA…PCAG), 434–480 (LYVI…SLED), 481–522 (TIYV…VCDG), and 524–570 (VHIL…TIVQ).

The protein is Kelch-like protein 35 (Klhl35) of Mus musculus (Mouse).